We begin with the raw amino-acid sequence, 404 residues long: Cysteine desulfurase IscS (404 aa).

Pyridoxal 5'-phosphate contacts are provided by residues 75–76, asparagine 155, glutamine 183, and 203–205; these read AT and SGH. Lysine 206 is modified (N6-(pyridoxal phosphate)lysine). Threonine 243 is a binding site for pyridoxal 5'-phosphate. The active-site Cysteine persulfide intermediate is the cysteine 328. [2Fe-2S] cluster is bound at residue cysteine 328.

It belongs to the class-V pyridoxal-phosphate-dependent aminotransferase family. NifS/IscS subfamily. As to quaternary structure, homodimer. Forms a heterotetramer with IscU, interacts with other sulfur acceptors. The cofactor is pyridoxal 5'-phosphate.

It localises to the cytoplasm. It carries out the reaction (sulfur carrier)-H + L-cysteine = (sulfur carrier)-SH + L-alanine. It participates in cofactor biosynthesis; iron-sulfur cluster biosynthesis. In terms of biological role, master enzyme that delivers sulfur to a number of partners involved in Fe-S cluster assembly, tRNA modification or cofactor biosynthesis. Catalyzes the removal of elemental sulfur atoms from cysteine to produce alanine. Functions as a sulfur delivery protein for Fe-S cluster synthesis onto IscU, an Fe-S scaffold assembly protein, as well as other S acceptor proteins. The chain is Cysteine desulfurase IscS from Shewanella halifaxensis (strain HAW-EB4).